We begin with the raw amino-acid sequence, 300 residues long: MNDELYARLRAELRGEILRDEPMARHTSLKVGGAADFFVTPADRDDLTALLALLAETGTPYLVVGGGYNLLVRDGGIRGVVISLARLDEMTLLAGERVMAGAGVTNRQFVQLLRDRGLGGLEFLCGIPGTVGGALAMNAGAHGGAVVDRVEELLTIRDGEMLQTGRDGLDYGYRFLRLAPGEIIVGATFRLDPADPDQIGARIAGYLEHRAASQKVGFPNAGSFFKNPEGTAAWRLIDETGLRGERVGGAQVSEAHANFLINRGGATAADFLALATRINEAVKQRTGITLEEEVRIVGEE.

The region spanning 30 to 194 (KVGGAADFFV…VGATFRLDPA (165 aa)) is the FAD-binding PCMH-type domain. The active site involves R174. The active-site Proton donor is the S223. The active site involves E293.

It belongs to the MurB family. The cofactor is FAD.

It localises to the cytoplasm. The enzyme catalyses UDP-N-acetyl-alpha-D-muramate + NADP(+) = UDP-N-acetyl-3-O-(1-carboxyvinyl)-alpha-D-glucosamine + NADPH + H(+). The protein operates within cell wall biogenesis; peptidoglycan biosynthesis. Cell wall formation. The polypeptide is UDP-N-acetylenolpyruvoylglucosamine reductase (Geobacter metallireducens (strain ATCC 53774 / DSM 7210 / GS-15)).